Consider the following 247-residue polypeptide: Cytochrome c oxidase subunit 2 (247 aa).

Residues 1 to 38 (MKEMMMSNMFNDVPTPWAMFFQDSATPNMEGMLELHNN) are Mitochondrial intermembrane-facing. Residues 39 to 58 (VVFYLCMMLGFVTFMLYNML) form a helical membrane-spanning segment. Topologically, residues 59 to 78 (TTYNKSVMPYKYLNQGQFME) are mitochondrial matrix. A helical transmembrane segment spans residues 79 to 103 (MMWTTLPAVMLLMIAFPSFILLYMC). At 104-247 (DEVMAPAMTI…ADFLAWIDEQ (144 aa)) the chain is on the mitochondrial intermembrane side. The Cu cation site is built by H182, C217, E219, C221, H225, and M228. E219 provides a ligand contact to Mg(2+).

The protein belongs to the cytochrome c oxidase subunit 2 family. In terms of assembly, component of the cytochrome c oxidase (complex IV, CIV), a multisubunit enzyme composed of a catalytic core of 3 subunits and several supernumerary subunits. The complex exists as a monomer or a dimer and forms supercomplexes (SCs) in the inner mitochondrial membrane with ubiquinol-cytochrome c oxidoreductase (cytochrome b-c1 complex, complex III, CIII). It depends on Cu cation as a cofactor.

The protein resides in the mitochondrion inner membrane. The catalysed reaction is 4 Fe(II)-[cytochrome c] + O2 + 8 H(+)(in) = 4 Fe(III)-[cytochrome c] + 2 H2O + 4 H(+)(out). Component of the cytochrome c oxidase, the last enzyme in the mitochondrial electron transport chain which drives oxidative phosphorylation. The respiratory chain contains 3 multisubunit complexes succinate dehydrogenase (complex II, CII), ubiquinol-cytochrome c oxidoreductase (cytochrome b-c1 complex, complex III, CIII) and cytochrome c oxidase (complex IV, CIV), that cooperate to transfer electrons derived from NADH and succinate to molecular oxygen, creating an electrochemical gradient over the inner membrane that drives transmembrane transport and the ATP synthase. Cytochrome c oxidase is the component of the respiratory chain that catalyzes the reduction of oxygen to water. Electrons originating from reduced cytochrome c in the intermembrane space (IMS) are transferred via the dinuclear copper A center (CU(A)) of subunit 2 and heme A of subunit 1 to the active site in subunit 1, a binuclear center (BNC) formed by heme A3 and copper B (CU(B)). The BNC reduces molecular oxygen to 2 water molecules using 4 electrons from cytochrome c in the IMS and 4 protons from the mitochondrial matrix. The polypeptide is Cytochrome c oxidase subunit 2 (COX2) (Brettanomyces custersianus (Yeast)).